The sequence spans 1013 residues: Antigenic heat-stable 120 kDa protein (1013 aa).

2 disordered regions span residues 1–73 and 348–396; these read DTSE…TSDP and GQSK…PQSQ. A compositionally biased stretch (basic and acidic residues) spans 12–27; it reads EYTEEQKQKLEQEQKE. Positions 47 to 61 are enriched in low complexity; that stretch reads SASSAQSTPSISALS. Composition is skewed to polar residues over residues 62 to 73, 348 to 373, and 380 to 396; these read GNISPDSQTSDP, GQSK…QYKQ, and PTNQ…PQSQ.

The protein localises to the cytoplasm. The polypeptide is Antigenic heat-stable 120 kDa protein (sca4) (Rickettsia rhipicephali).